The following is a 399-amino-acid chain: Leu/Ile/Val-binding protein homolog 7 (399 aa).

The N-terminal stretch at 1 to 22 (MEKHLIALSVAALLAGAAPASA) is a signal peptide.

It belongs to the leucine-binding protein family.

In terms of biological role, component of an amino-acid transport system. This chain is Leu/Ile/Val-binding protein homolog 7, found in Brucella suis biovar 1 (strain 1330).